Reading from the N-terminus, the 292-residue chain is uncharacterized protein (292 aa).

Disordered regions lie at residues 29-50 and 166-292; these read SEKP…LRDS and VKRK…EELK. Position 50 is a phosphoserine (serine 50). Polar residues-rich tracts occupy residues 176–189 and 208–217; these read NSKN…PVNN and GSPTNFSKLI. The span at 221-239 shows a compositional bias: basic and acidic residues; sequence YKDEWLQQQKADSDRRTPK. 2 stretches are compositionally biased toward polar residues: residues 240 to 250 and 260 to 270; these read TSEASVSTQST and DTETPQNSETP.

Phosphorylated upon DNA damage.

This is an uncharacterized protein from Rattus norvegicus (Rat).